The chain runs to 123 residues: Thioredoxin domain-containing protein 17 (123 aa).

One can recognise a Thioredoxin domain in the interval 41–123 (SWCPDCVTAE…DLVRMMFTED (83 aa)). Active-site nucleophile residues include cysteine 43 and cysteine 46. Cysteine 43 and cysteine 46 are joined by a disulfide.

It belongs to the thioredoxin family. Predominantly expressed in liver, brain and muscle. Also expressed in kidney, intestine, skin, stomach, gill and head kidney.

Its subcellular location is the cytoplasm. Its function is as follows. Disulfide reductase. May participate in various redox reactions through the reversible oxidation of its active center dithiol to a disulfide and catalyze dithiol-disulfide exchange reactions. Has peroxidase activity and may contribute to the elimination of cellular hydrogen peroxide. May function as an antioxidant involved in response to viral infection. In Epinephelus coioides (Orange-spotted grouper), this protein is Thioredoxin domain-containing protein 17.